The sequence spans 477 residues: Bifunctional protein HldE (477 aa).

The segment at Met-1–Thr-318 is ribokinase. Asn-195–Glu-198 lines the ATP pocket. Residue Asp-264 is part of the active site. Residues Met-344–Lys-477 form a cytidylyltransferase region.

This sequence in the N-terminal section; belongs to the carbohydrate kinase PfkB family. In the C-terminal section; belongs to the cytidylyltransferase family. In terms of assembly, homodimer.

The enzyme catalyses D-glycero-beta-D-manno-heptose 7-phosphate + ATP = D-glycero-beta-D-manno-heptose 1,7-bisphosphate + ADP + H(+). It carries out the reaction D-glycero-beta-D-manno-heptose 1-phosphate + ATP + H(+) = ADP-D-glycero-beta-D-manno-heptose + diphosphate. The protein operates within nucleotide-sugar biosynthesis; ADP-L-glycero-beta-D-manno-heptose biosynthesis; ADP-L-glycero-beta-D-manno-heptose from D-glycero-beta-D-manno-heptose 7-phosphate: step 1/4. Its pathway is nucleotide-sugar biosynthesis; ADP-L-glycero-beta-D-manno-heptose biosynthesis; ADP-L-glycero-beta-D-manno-heptose from D-glycero-beta-D-manno-heptose 7-phosphate: step 3/4. Its function is as follows. Catalyzes the phosphorylation of D-glycero-D-manno-heptose 7-phosphate at the C-1 position to selectively form D-glycero-beta-D-manno-heptose-1,7-bisphosphate. Functionally, catalyzes the ADP transfer from ATP to D-glycero-beta-D-manno-heptose 1-phosphate, yielding ADP-D-glycero-beta-D-manno-heptose. The protein is Bifunctional protein HldE of Klebsiella pneumoniae (strain 342).